Consider the following 347-residue polypeptide: MATAISVGVAVPAASRRREDGAGPPLLLRRRCLVEGQVRCRLPWLRPIRHNVRVQTSNVNVGAGSYEGGEAGSHGEHLDSSATRDSNKPTKPPSGSRYPQSIAAVLLLCALASAFIVFFKGQPSAVVAMLAKSGFTAAFTLIFVSEIGDKTFFIAALLAMQYQRALVLLGSMAALSLMTIVSVIIGRIFQSVPAQFQTTLPIGEYAAIALLAFFGFKSIKDAWQLPDNANGNLQGNSESGELAEAEELVKEKVAKKLTSPLEVLWKSFSLVFFAEWGDRSMLATIALGAAQSPFGVASGAIAGHLVATFLAIVGGAFLANYLSEKLVGLIGGVLFLLFAVATFFGVF.

The transit peptide at 1-12 (MATAISVGVAVP) directs the protein to the chloroplast. Residues 70-97 (EAGSHGEHLDSSATRDSNKPTKPPSGSR) are disordered. 7 consecutive transmembrane segments (helical) span residues 99–119 (PQSI…IVFF), 124–144 (SAVV…LIFV), 165–185 (ALVL…SVII), 196–216 (FQTT…FFGF), 257–277 (LTSP…AEWG), 299–319 (GAIA…AFLA), and 327–347 (VGLI…FGVF).

It belongs to the GDT1 family.

The protein resides in the plastid. Its subcellular location is the chloroplast membrane. The polypeptide is GDT1-like protein 2, chloroplastic (Oryza sativa subsp. japonica (Rice)).